A 196-amino-acid polypeptide reads, in one-letter code: Putative acetyltransferase YJL218W (196 aa).

Asparagine 84 lines the acetyl-CoA pocket. The Proton donor/acceptor role is filled by histidine 114. Acetyl-CoA is bound by residues glycine 141, alanine 159, 164-165 (IR), lysine 179, and arginine 182.

This sequence belongs to the transferase hexapeptide repeat family. In terms of assembly, homodimer.

The sequence is that of Putative acetyltransferase YJL218W from Saccharomyces cerevisiae (strain ATCC 204508 / S288c) (Baker's yeast).